Reading from the N-terminus, the 226-residue chain is Leucyl/phenylalanyl-tRNA--protein transferase (226 aa).

Belongs to the L/F-transferase family.

It localises to the cytoplasm. The enzyme catalyses N-terminal L-lysyl-[protein] + L-leucyl-tRNA(Leu) = N-terminal L-leucyl-L-lysyl-[protein] + tRNA(Leu) + H(+). It catalyses the reaction N-terminal L-arginyl-[protein] + L-leucyl-tRNA(Leu) = N-terminal L-leucyl-L-arginyl-[protein] + tRNA(Leu) + H(+). The catalysed reaction is L-phenylalanyl-tRNA(Phe) + an N-terminal L-alpha-aminoacyl-[protein] = an N-terminal L-phenylalanyl-L-alpha-aminoacyl-[protein] + tRNA(Phe). In terms of biological role, functions in the N-end rule pathway of protein degradation where it conjugates Leu, Phe and, less efficiently, Met from aminoacyl-tRNAs to the N-termini of proteins containing an N-terminal arginine or lysine. The polypeptide is Leucyl/phenylalanyl-tRNA--protein transferase (Pseudomonas entomophila (strain L48)).